We begin with the raw amino-acid sequence, 512 residues long: Maturase K (512 aa).

Belongs to the intron maturase 2 family. MatK subfamily.

Its subcellular location is the plastid. The protein localises to the chloroplast. Usually encoded in the trnK tRNA gene intron. Probably assists in splicing its own and other chloroplast group II introns. In Amorphophallus titanum (Titan arum), this protein is Maturase K.